The following is a 343-amino-acid chain: Transmembrane protein 120A (343 aa).

The Cytoplasmic segment spans residues 1 to 135; the sequence is MQSPPPDPLG…KFAYKDEYEK (135 aa). CoA is bound at residue Lys130. The chain crosses the membrane as a helical span at residues 136-156; it reads FKLYLTIILIVISFTCRFLLN. Residues 157-162 lie on the Extracellular side of the membrane; sequence SRVTDA. Residues 163 to 183 form a helical membrane-spanning segment; that stretch reads AFNFLLVWYYCTLTIRESILI. Residues 184 to 190 lie on the Cytoplasmic side of the membrane; sequence NNGSRIK. The CoA site is built by Ser187 and Arg188. The chain crosses the membrane as a helical span at residues 191 to 211; sequence GWWVFHHYVSTFLSGVMLTWP. Topologically, residues 212–222 are extracellular; that stretch reads DGLMYQKFRNQ. Residues 223-240 traverse the membrane as a helical segment; the sequence is FLSFSMYQSFVQFLQYYY. CoA is bound by residues Gln237, Tyr240, Gln241, and His283. Residues 241-273 lie on the Cytoplasmic side of the membrane; it reads QSGCLYRLRALGERHTMDLTVEGFQSWMWRGLT. A helical membrane pass occupies residues 274–294; the sequence is FLLPFLFFGHFWQLFNALTLF. The Extracellular segment spans residues 295 to 305; sequence NLARDPECKEW. Residues 306–326 form a helical membrane-spanning segment; it reads QVLMCGFPFLLLFLGNFFTTL. At 327 to 343 the chain is on the cytoplasmic side; it reads RVVHQKFHSQQHGNKKD. Residue Lys332 coordinates CoA.

Belongs to the TMEM120 family. As to quaternary structure, homodimer. Forms heterooligomer with TMEM120B. Interacts with PKD2; TMEM120A inhibits PKD2 channel activity through the physical association of PKD2 with TMEM120A. Widely expressed, with higher expression in the heart, kidneys, colon and sensory neurons of the dorsal root ganglia. Expressed in nociceptors. Highly expressed in white adipose tissue (at protein level). Highly expressed in brown adipose tissue and expressed at low levels in liver.

Its subcellular location is the cell membrane. It localises to the nucleus envelope. The protein resides in the nucleus inner membrane. The protein localises to the endoplasmic reticulum. Its function is as follows. Multifunctional protein involved in mechanosensation, and plays an essential role in lipid metabolism and adipocyte differentiation. May function as a potential ion channel involved in sensing mechanical stimuli. Mediates the mechanosensitivity of the PKD2-TMEM120A channel complex through direct physical interaction. TMEM120A seems to affect mechanosensation by inhibiting PIEZO2 channels, possibly by altering cellular lipid content. TMEM120A is structurally similar to a lipid-modifying enzyme, ELOVL7, and contains a bound coenzyme A molecule, which suggests it might function as an enzyme in lipid metabolism. In Mus musculus (Mouse), this protein is Transmembrane protein 120A.